A 159-amino-acid chain; its full sequence is Phosphopantetheine adenylyltransferase (159 aa).

Thr10 is a binding site for substrate. ATP-binding positions include 10–11 (TF) and His18. Substrate-binding residues include Lys42, Met74, and Arg88. ATP-binding positions include 89–91 (GLR), Glu99, and 124–130 (WSFISSS).

This sequence belongs to the bacterial CoaD family. In terms of assembly, homohexamer. Mg(2+) is required as a cofactor.

Its subcellular location is the cytoplasm. It carries out the reaction (R)-4'-phosphopantetheine + ATP + H(+) = 3'-dephospho-CoA + diphosphate. It participates in cofactor biosynthesis; coenzyme A biosynthesis; CoA from (R)-pantothenate: step 4/5. Reversibly transfers an adenylyl group from ATP to 4'-phosphopantetheine, yielding dephospho-CoA (dPCoA) and pyrophosphate. This is Phosphopantetheine adenylyltransferase from Salmonella choleraesuis (strain SC-B67).